Reading from the N-terminus, the 888-residue chain is E3 ubiquitin-protein ligase SH3RF1 (888 aa).

The RING-type zinc finger occupies 12–53 (CPVCLERLDASAKVLPCQHTFCKRCLLGIVGSRNELRCPECR). Residues 108–127 (SSKDLQSSQGGQQPRVQSWS) show a composition bias toward polar residues. The segment at 108–128 (SSKDLQSSQGGQQPRVQSWSP) is disordered. SH3 domains are found at residues 134–193 (PQLP…IIKP) and 196–259 (QPPP…FNSA). The disordered stretch occupies residues 275 to 321 (DAGECSSAAAQSSTAPKHSDTKKNTKKRHSFTSLTMANKSSQASQNR). The segment at 292-362 (HSDTKKNTKK…APSQVHISTT (71 aa)) is interaction with RAC1. S304 is subject to Phosphoserine. Over residues 305–321 (FTSLTMANKSSQASQNR) the composition is skewed to polar residues. The interaction with AKT2 stretch occupies residues 440-543 (HLRPQTRPSV…STAGGPAQKL (104 aa)). The region spanning 445–506 (TRPSVYVAIY…PGNYVAPVTR (62 aa)) is the SH3 3 domain. Disordered regions lie at residues 516 to 548 (VPMS…GNGV), 620 to 639 (SVGL…LMPG), and 684 to 741 (TVLP…ASPT). Residues 520–535 (TAGQTSRGVTMVSPST) show a composition bias toward polar residues. At S532 the chain carries Phosphoserine. Positions 692–704 (SPDSASSACGNSS) are enriched in polar residues. Over residues 707-718 (KPDKDSKKEKKG) the composition is skewed to basic and acidic residues. Position 735 is a phosphoserine (S735). Residues 829–888 (VVCERHRVVVSYPPQSEAELELKEGDIVFVHKKREDGWFKGTLQRNGKTGLFPGSFVENI) enclose the SH3 4 domain.

Belongs to the SH3RF family. Interacts with RAC1; in a GTP-dependent manner. Interacts with MAP3K10/MLK2 and MAP3K11/MLK3. Interacts with MAPK8IP; this interaction leads to the PJAC complex (POSH-JIP or SH3RF1/MAPK8IP apoptotic complex) with a 1:1 ratio. Interacts with SIAH1. Interacts with HERP1. Probably part of a signaling complex that may contain SH3RF1, MAPK8IP, DLK1, MAP2K4/MKK4, MAP2K7/MKK7, MAPK8/JNK1, MAPK9/JNK2, AKT1 and AKT2. Found in a complex with RAC2, MAP3K7/TAK1, MAP2K7/MKK7, MAPK8IP1/JIP1, MAPK8/JNK1 and MAPK9/JNK2. Found in a complex with RAC1, MAP3K11/MLK3, MAP2K7/MKK7, MAPK8IP1/JIP1 and MAPK8/JNK1. Interacts with SH3RF2. In terms of processing, phosphorylated at Ser-304 by AKT1 and AKT2. When phosphorylated, it has reduced ability to bind Rac. Post-translationally, autoubiquitinated. Ubiquitinated by SH3RF2, leading to proteasome-mediated degradation.

Its subcellular location is the cytoplasm. It is found in the perinuclear region. The protein resides in the cell projection. It localises to the lamellipodium. The protein localises to the golgi apparatus. Its subcellular location is the trans-Golgi network. It carries out the reaction S-ubiquitinyl-[E2 ubiquitin-conjugating enzyme]-L-cysteine + [acceptor protein]-L-lysine = [E2 ubiquitin-conjugating enzyme]-L-cysteine + N(6)-ubiquitinyl-[acceptor protein]-L-lysine.. It participates in protein modification; protein ubiquitination. In terms of biological role, has E3 ubiquitin-protein ligase activity. In the absence of an external substrate, it can catalyze self-ubiquitination. Stimulates ubiquitination of potassium channel KCNJ1, enhancing it's dynamin-dependent and clathrin-independent endocytosis. Acts as a scaffold protein that coordinates with MAPK8IP1/JIP1 in organizing different components of the JNK pathway, including RAC1 or RAC2, MAP3K11/MLK3 or MAP3K7/TAK1, MAP2K7/MKK7, MAPK8/JNK1 and/or MAPK9/JNK2 into a functional multiprotein complex to ensure the effective activation of the JNK signaling pathway. Regulates the differentiation of CD4(+) and CD8(+) T-cells and promotes T-helper 1 (Th1) cell differentiation. Regulates the activation of MAPK8/JNK1 and MAPK9/JNK2 in CD4(+) T-cells and the activation of MAPK8/JNK1 in CD8(+) T-cells. Plays a crucial role in the migration of neocortical neurons in the developing brain. Controls proper cortical neuronal migration and the formation of proximal cytoplasmic dilation in the leading process (PCDLP) in migratory neocortical neurons by regulating the proper localization of activated RAC1 and F-actin assembly. Functionally, (Microbial infection) Plays an essential role in the targeting of HIV-1 Gag to the plasma membrane, this function is dependent on it's RING domain, and hence it's E3 ligase activity. This chain is E3 ubiquitin-protein ligase SH3RF1 (SH3RF1), found in Homo sapiens (Human).